The sequence spans 117 residues: Large ribosomal subunit protein uL18 (117 aa).

This sequence belongs to the universal ribosomal protein uL18 family. As to quaternary structure, part of the 50S ribosomal subunit; part of the 5S rRNA/L5/L18/L25 subcomplex. Contacts the 5S and 23S rRNAs.

This is one of the proteins that bind and probably mediate the attachment of the 5S RNA into the large ribosomal subunit, where it forms part of the central protuberance. The polypeptide is Large ribosomal subunit protein uL18 (Colwellia psychrerythraea (strain 34H / ATCC BAA-681) (Vibrio psychroerythus)).